Reading from the N-terminus, the 858-residue chain is G2-specific protein kinase nim-1 (858 aa).

In terms of domain architecture, Protein kinase spans 7–290 (YELLEKIGHG…TATLLNLPIV (284 aa)). ATP-binding positions include 13–21 (IGHGSFGII) and Lys36. Catalysis depends on Asp161, which acts as the Proton acceptor. Thr194 bears the Phosphothreonine; by autocatalysis mark. Positions 291-383 (RLMRKEKEVV…QARVEAELQR (93 aa)) form a coiled coil. 2 disordered regions span residues 495-693 (TKAP…LPQA) and 747-858 (SAVD…LSQS). Positions 516-525 (SNWEVPRETE) are enriched in basic and acidic residues. The span at 526-535 (MIDSGDESEA) shows a compositional bias: acidic residues. Polar residues-rich tracts occupy residues 548 to 572 (SSKN…NSNV) and 580 to 598 (SKQT…SSIG). Residues 636–648 (SANNINNSSNGGS) show a composition bias toward low complexity. Polar residues predominate over residues 650–661 (APSSTVTSNITV). A compositionally biased stretch (low complexity) spans 676 to 691 (SSFSQQQNNQPQQSLP). Positions 760–780 (GQSQLPTRPRSQPQPITANFE) are enriched in polar residues. Residues 781-802 (QQQQQQQSNTNSISSSNSAGSG) show a composition bias toward low complexity.

It belongs to the protein kinase superfamily. CAMK Ser/Thr protein kinase family.

It localises to the nucleus. The enzyme catalyses L-seryl-[protein] + ATP = O-phospho-L-seryl-[protein] + ADP + H(+). It carries out the reaction L-threonyl-[protein] + ATP = O-phospho-L-threonyl-[protein] + ADP + H(+). Protein kinase that plays an important role in mitotic regulation. The polypeptide is G2-specific protein kinase nim-1 (nim-1) (Neurospora crassa (strain ATCC 24698 / 74-OR23-1A / CBS 708.71 / DSM 1257 / FGSC 987)).